Reading from the N-terminus, the 398-residue chain is MRAKKVVLAYSGGVDTSVCIPYLKHEWGVEQVVALAADLGQGEDLEAVRQKALASGADQAIVQDAREDFVYDYAFAALQANALYEGRYPLATALARPLIARILVKCAQAVGADAVAHGCTGKGNDQVRFDVSIGALDPKLKVLAPAREWGMSREETIAYGERYGIPAPVKKKSPYSIDFNLLGRSVECGVLEDPWAEPPEEVYAMTKCVADTPDQPTYIELEFERGVPVALNGASLGGVKLVGELNRLAGENGVGRIDMVENRLVGIKSREIYECPAGVVLVLAHQALEALTLPREVTAYKRGVEDTYAQLVYNGLWYSPLRGALDGFIDFTQQRASGVVRVRLHKGTATVVGRKSPYSLYDVELATYSEGDSFDHKAAEGFIYVWGLPTRIYAQVRK.

ATP-binding positions include 9 to 17 (AYSGGVDTS) and alanine 37. Tyrosine 88 lines the L-citrulline pocket. Position 118 (glycine 118) interacts with ATP. L-aspartate contacts are provided by threonine 120, asparagine 124, and aspartate 125. L-citrulline is bound at residue asparagine 124. The L-citrulline site is built by arginine 128, serine 176, serine 185, glutamate 261, and tyrosine 273.

Belongs to the argininosuccinate synthase family. Type 1 subfamily. In terms of assembly, homotetramer.

Its subcellular location is the cytoplasm. It carries out the reaction L-citrulline + L-aspartate + ATP = 2-(N(omega)-L-arginino)succinate + AMP + diphosphate + H(+). The protein operates within amino-acid biosynthesis; L-arginine biosynthesis; L-arginine from L-ornithine and carbamoyl phosphate: step 2/3. The chain is Argininosuccinate synthase from Gloeobacter violaceus (strain ATCC 29082 / PCC 7421).